Reading from the N-terminus, the 364-residue chain is Trans-enoyl reductase ccsC (364 aa).

An NADP(+)-binding site is contributed by 52 to 55 (CDYK). 141 to 148 (TGLATLGM) is a binding site for substrate. NADP(+) is bound by residues 176–179 (SSSV), 199–202 (SPRN), Tyr-217, and 264–265 (LE). 284–288 (GPALL) contributes to the substrate binding site. Position 353 to 354 (353 to 354 (VS)) interacts with NADP(+).

Belongs to the zinc-containing alcohol dehydrogenase family. Monomer.

It functions in the pathway mycotoxin biosynthesis. In terms of biological role, trans-enoyl reductase; part of the gene cluster that mediates the biosynthesis of a family of the mycotoxins cytochalasins E and K. The hybrid PKS-NRPS synthetase ccsA and the enoyl reductase ccsC are responsible for fusion of phenylalanine with an octaketide backbone and subsequent release of the stable tetramic acid precursor. The polyketide synthase module (PKS) of the PKS-NRPS ccsA is responsible for the synthesis of the octaketide backbone. The downstream nonribosomal peptide synthetase (NRPS) amidates the carboxyl end of the octaketide with a phenylalanine. A reductase-like domain (R) at the C-terminus catalyzes the reductive release of the polyketide-amino acid intermediate. Because ccsA lacks a designated enoylreductase (ER) domain, the required activity is provided the enoyl reductase ccsC. Upon formation of the 11-membered carbocycle-fused perhydroisoindolone intermediate, a number of oxidative steps are required to afford the final cytochalasin E and K, including two hydroxylations at C17 and C18, one alcohol oxidation at C17, one epoxidation at C6 and C7 and two Baeyer-Villiger oxidations. The oxidative modification at C17, C18 and the C6-C7 epoxidation are likely to be catalyzed by the two cytochrome P450 oxygenases ccsD and ccsG. CcsD may be responsible for the epoxidation of the C6-C7 double bond. CcsG may be responsible for the successive oxidative modifications at C17 and C18. The double Baeyer-Villiger oxidations of ketocytochalasin to precytochalasin and cytochalasin Z(16) are among the final steps leading to cytochalasin E and K and are catalyzed by ccsB. The first oxygen insertion step follows that of the classic BVMO mechanism, generating the ester precytochalasin. Release of precytochalasin into an aqueous environment can generate the shunt product iso-precytochalasin through spontaneous isomerization. Alternatively, precytochalasin can undergo further oxidation by ccsB to yield the in-line carbonate-containing cytochalasin Z(16). Cytochalasin Z(16) is a precursor to cytochalasin E and cytochalasin K, whereas iso-precytochalasin is a precursor to cytochalasin Z(17) and rosellichalasin. The hydrolyase ccsE may catalyze hydrolysis of epoxide bond in cytochalasin E to afford cytochalasin K. The function of ccsF has not been assigned but it may play a role in post-PKS-NRPS biosynthetic step, resistance or transport of cytochalasins and related PKS-NRPS products. In Aspergillus clavatus (strain ATCC 1007 / CBS 513.65 / DSM 816 / NCTC 3887 / NRRL 1 / QM 1276 / 107), this protein is Trans-enoyl reductase ccsC.